The chain runs to 303 residues: Fe-S cluster assembly protein DRE2 (303 aa).

The segment at 1–125 (MTHSRTALVL…WQKRAVTASA (125 aa)) is N-terminal SAM-like domain. The tract at residues 126-188 (PVKLAPRQPV…GDAPIAENDL (63 aa)) is linker. Residues Cys202, Cys213, Cys216, and Cys218 each coordinate [2Fe-2S] cluster. The fe-S binding site A stretch occupies residues 202-218 (CGRTQTRRRKACKDCTC). [4Fe-4S] cluster-binding residues include Cys266, Cys269, Cys277, and Cys280. Short sequence motifs (cx2C motif) lie at residues 266-269 (CGSC) and 277-280 (CSGC). The segment at 266–280 (CGSCSLGDAFRCSGC) is fe-S binding site B.

This sequence belongs to the anamorsin family. In terms of assembly, monomer. Interacts with TAH18. Interacts with MIA40. The cofactor is [2Fe-2S] cluster. Requires [4Fe-4S] cluster as cofactor.

The protein localises to the cytoplasm. It localises to the mitochondrion intermembrane space. Component of the cytosolic iron-sulfur (Fe-S) protein assembly (CIA) machinery required for the maturation of extramitochondrial Fe-S proteins. Part of an electron transfer chain functioning in an early step of cytosolic Fe-S biogenesis, facilitating the de novo assembly of a [4Fe-4S] cluster on the scaffold complex CFD1-NBP35. Electrons are transferred to DRE2 from NADPH via the FAD- and FMN-containing protein TAH18. TAH18-DRE2 are also required for the assembly of the diferric tyrosyl radical cofactor of ribonucleotide reductase (RNR), probably by providing electrons for reduction during radical cofactor maturation in the catalytic small subunit RNR2. In Eremothecium gossypii (strain ATCC 10895 / CBS 109.51 / FGSC 9923 / NRRL Y-1056) (Yeast), this protein is Fe-S cluster assembly protein DRE2.